A 235-amino-acid polypeptide reads, in one-letter code: MAGLAVNVDHVATLRQARGVDYPDPVAAAVLVELAGADGVVVHLREDRRHIQDRDVRIIRQIVQSKLILEMAATPEMIGIALEVRPHQATLVPEKREEVTTEGGLDVVMHKDSVADAIKTLQAGGIKVSLFVDPDLNQIKAAHKAGADVVELHTGDFCESRSPKAMAAIQEAARLARKVGMEVHAGHGIDFRSIQDFVGVKEIQEFSIGHSIVSRAVFIGLDAAVKEMMALARQV.

Asn-7 is a 3-amino-2-oxopropyl phosphate binding site. 9-10 is a 1-deoxy-D-xylulose 5-phosphate binding site; the sequence is DH. Arg-18 provides a ligand contact to 3-amino-2-oxopropyl phosphate. The Proton acceptor role is filled by His-43. 2 residues coordinate 1-deoxy-D-xylulose 5-phosphate: Arg-45 and His-50. Glu-70 acts as the Proton acceptor in catalysis. Thr-100 contacts 1-deoxy-D-xylulose 5-phosphate. Residue His-187 is the Proton donor of the active site. 3-amino-2-oxopropyl phosphate contacts are provided by residues Gly-188 and 209-210; that span reads GH.

This sequence belongs to the PNP synthase family. As to quaternary structure, homooctamer; tetramer of dimers.

It localises to the cytoplasm. The enzyme catalyses 3-amino-2-oxopropyl phosphate + 1-deoxy-D-xylulose 5-phosphate = pyridoxine 5'-phosphate + phosphate + 2 H2O + H(+). The protein operates within cofactor biosynthesis; pyridoxine 5'-phosphate biosynthesis; pyridoxine 5'-phosphate from D-erythrose 4-phosphate: step 5/5. Functionally, catalyzes the complicated ring closure reaction between the two acyclic compounds 1-deoxy-D-xylulose-5-phosphate (DXP) and 3-amino-2-oxopropyl phosphate (1-amino-acetone-3-phosphate or AAP) to form pyridoxine 5'-phosphate (PNP) and inorganic phosphate. In Desulfatibacillum aliphaticivorans, this protein is Pyridoxine 5'-phosphate synthase.